The sequence spans 386 residues: GTPase Obg (386 aa).

The Obg domain occupies Met1–Leu159. The tract at residues Asn127–Gly147 is disordered. Residues Arg129–Thr145 show a composition bias toward polar residues. The OBG-type G domain occupies Ala160–Ile333. GTP contacts are provided by residues Gly166–Ser173, Phe191–Val195, Asp213–Gly216, Asn283–Asp286, and Ser314–Ala316. Ser173 and Thr193 together coordinate Mg(2+).

The protein belongs to the TRAFAC class OBG-HflX-like GTPase superfamily. OBG GTPase family. In terms of assembly, monomer. Mg(2+) serves as cofactor.

The protein localises to the cytoplasm. An essential GTPase which binds GTP, GDP and possibly (p)ppGpp with moderate affinity, with high nucleotide exchange rates and a fairly low GTP hydrolysis rate. Plays a role in control of the cell cycle, stress response, ribosome biogenesis and in those bacteria that undergo differentiation, in morphogenesis control. This is GTPase Obg from Escherichia coli (strain UTI89 / UPEC).